Consider the following 356-residue polypeptide: sn-glycerol-3-phosphate import ATP-binding protein UgpC (356 aa).

The ABC transporter domain maps to 4–235; that stretch reads LKLQAVTKSW…PASRFVASFI (232 aa). An ATP-binding site is contributed by 37 to 44; the sequence is GPSGCGKS.

This sequence belongs to the ABC transporter superfamily. sn-glycerol-3-phosphate importer (TC 3.A.1.1.3) family. In terms of assembly, the complex is composed of two ATP-binding proteins (UgpC), two transmembrane proteins (UgpA and UgpE) and a solute-binding protein (UgpB).

Its subcellular location is the cell inner membrane. It carries out the reaction sn-glycerol 3-phosphate(out) + ATP + H2O = sn-glycerol 3-phosphate(in) + ADP + phosphate + H(+). Its function is as follows. Part of the ABC transporter complex UgpBAEC involved in sn-glycerol-3-phosphate (G3P) import. Responsible for energy coupling to the transport system. The chain is sn-glycerol-3-phosphate import ATP-binding protein UgpC from Salmonella typhi.